The chain runs to 109 residues: Flagellar hook-basal body complex protein FliE 2 (109 aa).

This sequence belongs to the FliE family.

The protein resides in the bacterial flagellum basal body. This chain is Flagellar hook-basal body complex protein FliE 2 (fliE2), found in Bradyrhizobium diazoefficiens (strain JCM 10833 / BCRC 13528 / IAM 13628 / NBRC 14792 / USDA 110).